The sequence spans 65 residues: Large ribosomal subunit protein bL35 (65 aa).

Residues 1-47 (MPKIKTNRGAAKRFRKTASGKIKRNSAFTSHILTSKTRKRKRQLRSS) are disordered. A compositionally biased stretch (basic residues) spans 10–24 (AAKRFRKTASGKIKR). Over residues 26–35 (SAFTSHILTS) the composition is skewed to polar residues.

This sequence belongs to the bacterial ribosomal protein bL35 family.

In Geobacter metallireducens (strain ATCC 53774 / DSM 7210 / GS-15), this protein is Large ribosomal subunit protein bL35.